Reading from the N-terminus, the 141-residue chain is Large ribosomal subunit protein uL16 (141 aa).

The segment at 1–23 (MLMPKRTKYRKQMKGRNRGKAHR) is disordered.

Belongs to the universal ribosomal protein uL16 family. As to quaternary structure, part of the 50S ribosomal subunit.

In terms of biological role, binds 23S rRNA and is also seen to make contacts with the A and possibly P site tRNAs. This chain is Large ribosomal subunit protein uL16, found in Helicobacter pylori (strain P12).